Here is a 239-residue protein sequence, read N- to C-terminus: MEFFNILQSACNDVNLDFNDKKYNQLISYKNLIQEWNKKINLTAIVEDDEIIKKHFIDCIKIFKSSPIGEAKSLIDIGTGAGFPGIPIKILKEDIEITLLDSLQKRINFLNIVIGELQLKNIQCLHGRAEDYAQEIQHRQKYDIAVSRAVANLAVLSEFCIPFVEKGGYFIAMKGPSVEEEITAATKSIEILGGKIEDIIKIDIEDTDLKHNLVIIKKVKETGKRYPRKPGIIKKNPLK.

Residues G78, F83, 129–130 (AE), and R148 contribute to the S-adenosyl-L-methionine site.

It belongs to the methyltransferase superfamily. RNA methyltransferase RsmG family.

Its subcellular location is the cytoplasm. Specifically methylates the N7 position of a guanine in 16S rRNA. The protein is Ribosomal RNA small subunit methyltransferase G of Clostridium botulinum (strain Okra / Type B1).